The following is a 377-amino-acid chain: MLYWLLYQKLFPYFRPFRIFRYLTFRTAFASLTALLIALLIGPYVIEKLREFQIGQYIREEGPQAHQKKAGTPTMGGVLICIAILLPTLLWSDLSDPFVWIVMLSTLAFGAIGFADDYIKVVHRRNLGLTARAKMTYQILASAAIGVALVVLQGQGSYSTDLMVPFAKSLRPRFSIPALLHVPHLAYFAFIPFVIFVIIVIVGSSNAVNLTDGLDGLAIGCTIIAAGALTVLTYVSGHAVFADYLELQRMPMVGEVTIFCGAMVGASIGFLWYNAHPAQIFMGDVGSLALGGAIATVAVVIKQELLLPFIGGIFVLEALSVILQVGSYKLRKKRIFKMAPLHHHFELIGWSESKVIVRFWIAALVFALFALTTLKLR.

10 helical membrane passes run 27–47 (TAFA…YVIE), 71–91 (GTPT…TLLW), 94–114 (LSDP…AIGF), 139–159 (ILAS…GSYS), 182–202 (VPHL…IVIV), 216–236 (GLAI…TYVS), 252–272 (MVGE…GFLW), 280–300 (IFMG…VAVV), 305–325 (LLLP…ILQV), and 354–374 (KVIV…LTTL).

Belongs to the glycosyltransferase 4 family. MraY subfamily. Mg(2+) is required as a cofactor.

Its subcellular location is the cell inner membrane. It carries out the reaction UDP-N-acetyl-alpha-D-muramoyl-L-alanyl-gamma-D-glutamyl-meso-2,6-diaminopimeloyl-D-alanyl-D-alanine + di-trans,octa-cis-undecaprenyl phosphate = di-trans,octa-cis-undecaprenyl diphospho-N-acetyl-alpha-D-muramoyl-L-alanyl-D-glutamyl-meso-2,6-diaminopimeloyl-D-alanyl-D-alanine + UMP. The protein operates within cell wall biogenesis; peptidoglycan biosynthesis. Catalyzes the initial step of the lipid cycle reactions in the biosynthesis of the cell wall peptidoglycan: transfers peptidoglycan precursor phospho-MurNAc-pentapeptide from UDP-MurNAc-pentapeptide onto the lipid carrier undecaprenyl phosphate, yielding undecaprenyl-pyrophosphoryl-MurNAc-pentapeptide, known as lipid I. This chain is Phospho-N-acetylmuramoyl-pentapeptide-transferase, found in Acidobacterium capsulatum (strain ATCC 51196 / DSM 11244 / BCRC 80197 / JCM 7670 / NBRC 15755 / NCIMB 13165 / 161).